Consider the following 241-residue polypeptide: Ribosomal RNA small subunit methyltransferase J (241 aa).

S-adenosyl-L-methionine is bound by residues 94-95 (RD) and aspartate 163.

Belongs to the methyltransferase superfamily. RsmJ family.

It is found in the cytoplasm. It catalyses the reaction guanosine(1516) in 16S rRNA + S-adenosyl-L-methionine = N(2)-methylguanosine(1516) in 16S rRNA + S-adenosyl-L-homocysteine + H(+). Specifically methylates the guanosine in position 1516 of 16S rRNA. The polypeptide is Ribosomal RNA small subunit methyltransferase J (Francisella tularensis subsp. tularensis (strain FSC 198)).